The chain runs to 191 residues: Ribonuclease HII (191 aa).

An RNase H type-2 domain is found at 7-191; it reads ILMAGVDEVG…YSPVADLISK (185 aa). A divalent metal cation is bound by residues Asp-13, Glu-14, and Asp-103.

It belongs to the RNase HII family. Mn(2+) serves as cofactor. Mg(2+) is required as a cofactor.

Its subcellular location is the cytoplasm. It carries out the reaction Endonucleolytic cleavage to 5'-phosphomonoester.. In terms of biological role, endonuclease that specifically degrades the RNA of RNA-DNA hybrids. The polypeptide is Ribonuclease HII (Legionella pneumophila (strain Corby)).